Here is a 248-residue protein sequence, read N- to C-terminus: Anamorsin homolog (248 aa).

Positions 4–129 (FKGLQKSLYI…ETGSSARLSF (126 aa)) are N-terminal SAM-like domain. Residues 130–161 (AKKNANAVNVWKISGDDEELIDEEELLDEEDK) are linker. C172, C181, C184, and C186 together coordinate [2Fe-2S] cluster. Positions 172–186 (CSTTGKRKACKNCSC) are fe-S binding site A. Residues C209, C212, C220, and C223 each coordinate [4Fe-4S] cluster. 2 short sequence motifs (cx2C motif) span residues 209–212 (CGNC) and 220–223 (CSTC). The fe-S binding site B stretch occupies residues 209 to 223 (CGNCYLGDAFRCSTC).

Belongs to the anamorsin family. As to quaternary structure, monomer. The cofactor is [2Fe-2S] cluster. [4Fe-4S] cluster serves as cofactor.

The protein resides in the cytoplasm. It localises to the mitochondrion intermembrane space. Component of the cytosolic iron-sulfur (Fe-S) protein assembly (CIA) machinery. Required for the maturation of extramitochondrial Fe-S proteins. Part of an electron transfer chain functioning in an early step of cytosolic Fe-S biogenesis, facilitating the de novo assembly of a [4Fe-4S] cluster on the cytosolic Fe-S scaffold complex. Electrons are transferred from NADPH via a FAD- and FMN-containing diflavin oxidoreductase. Together with the diflavin oxidoreductase, also required for the assembly of the diferric tyrosyl radical cofactor of ribonucleotide reductase (RNR), probably by providing electrons for reduction during radical cofactor maturation in the catalytic small subunit. In Drosophila simulans (Fruit fly), this protein is Anamorsin homolog.